Consider the following 269-residue polypeptide: MVRIAIAGAAGRMGRNLVKAAHHNSEASVGAGSERPESSLVGVDVGELCGEGRFDVALVDDLSKAVEEFDVIVDFTAPVSTLANIELCKRHGKKLIIGTTGFSEEEKLVIDAASKEMAIVMAPNYSVGVNLVFKLLEKAAKVMGDYCDVEIVEAHHRHKVDAPSGTAIGMGEAIAGAMGNELNDVAVWSREGITGERTKDEIGFATIRAGDIIGEHTAMFADIGERVEITHKATDRMTFANGAIKAAVWLNDKPAGFYTMTDVLGLNDL.

Residues 8–13 (GAAGRM) and E34 contribute to the NAD(+) site. R35 contributes to the NADP(+) binding site. Residues 98–100 (GTT) and 122–125 (APNY) each bind NAD(+). H155 functions as the Proton donor/acceptor in the catalytic mechanism. Residue H156 participates in (S)-2,3,4,5-tetrahydrodipicolinate binding. Catalysis depends on K159, which acts as the Proton donor. 165–166 (GT) is a binding site for (S)-2,3,4,5-tetrahydrodipicolinate.

This sequence belongs to the DapB family.

The protein localises to the cytoplasm. The catalysed reaction is (S)-2,3,4,5-tetrahydrodipicolinate + NAD(+) + H2O = (2S,4S)-4-hydroxy-2,3,4,5-tetrahydrodipicolinate + NADH + H(+). It catalyses the reaction (S)-2,3,4,5-tetrahydrodipicolinate + NADP(+) + H2O = (2S,4S)-4-hydroxy-2,3,4,5-tetrahydrodipicolinate + NADPH + H(+). It functions in the pathway amino-acid biosynthesis; L-lysine biosynthesis via DAP pathway; (S)-tetrahydrodipicolinate from L-aspartate: step 4/4. In terms of biological role, catalyzes the conversion of 4-hydroxy-tetrahydrodipicolinate (HTPA) to tetrahydrodipicolinate. The sequence is that of 4-hydroxy-tetrahydrodipicolinate reductase from Vibrio atlanticus (strain LGP32) (Vibrio splendidus (strain Mel32)).